The primary structure comprises 151 residues: 3-hydroxyacyl-[acyl-carrier-protein] dehydratase FabZ (151 aa).

Histidine 49 is a catalytic residue.

This sequence belongs to the thioester dehydratase family. FabZ subfamily.

The protein resides in the cytoplasm. It catalyses the reaction a (3R)-hydroxyacyl-[ACP] = a (2E)-enoyl-[ACP] + H2O. In terms of biological role, involved in unsaturated fatty acids biosynthesis. Catalyzes the dehydration of short chain beta-hydroxyacyl-ACPs and long chain saturated and unsaturated beta-hydroxyacyl-ACPs. This is 3-hydroxyacyl-[acyl-carrier-protein] dehydratase FabZ from Bordetella parapertussis (strain 12822 / ATCC BAA-587 / NCTC 13253).